Reading from the N-terminus, the 311-residue chain is Methionyl-tRNA formyltransferase (311 aa).

110 to 113 (SLLP) contributes to the (6S)-5,6,7,8-tetrahydrofolate binding site.

Belongs to the Fmt family.

It catalyses the reaction L-methionyl-tRNA(fMet) + (6R)-10-formyltetrahydrofolate = N-formyl-L-methionyl-tRNA(fMet) + (6S)-5,6,7,8-tetrahydrofolate + H(+). Its function is as follows. Attaches a formyl group to the free amino group of methionyl-tRNA(fMet). The formyl group appears to play a dual role in the initiator identity of N-formylmethionyl-tRNA by promoting its recognition by IF2 and preventing the misappropriation of this tRNA by the elongation apparatus. In Streptococcus pyogenes serotype M2 (strain MGAS10270), this protein is Methionyl-tRNA formyltransferase.